Consider the following 72-residue polypeptide: Translation initiation factor IF-1 (72 aa).

The S1-like domain maps to 1–72 (MAKEGAIEVE…TRGRIVYRYK (72 aa)).

Belongs to the IF-1 family. As to quaternary structure, component of the 30S ribosomal translation pre-initiation complex which assembles on the 30S ribosome in the order IF-2 and IF-3, IF-1 and N-formylmethionyl-tRNA(fMet); mRNA recruitment can occur at any time during PIC assembly.

It is found in the cytoplasm. Its function is as follows. One of the essential components for the initiation of protein synthesis. Stabilizes the binding of IF-2 and IF-3 on the 30S subunit to which N-formylmethionyl-tRNA(fMet) subsequently binds. Helps modulate mRNA selection, yielding the 30S pre-initiation complex (PIC). Upon addition of the 50S ribosomal subunit IF-1, IF-2 and IF-3 are released leaving the mature 70S translation initiation complex. The protein is Translation initiation factor IF-1 of Corynebacterium glutamicum (strain R).